The primary structure comprises 105 residues: Flagellar transcriptional regulator FlhD (105 aa).

This sequence belongs to the FlhD family. As to quaternary structure, homodimer; disulfide-linked. Forms a heterohexamer composed of two FlhC and four FlhD subunits. Each FlhC binds a FlhD dimer, forming a heterotrimer, and a hexamer assembles by dimerization of two heterotrimers.

The protein resides in the cytoplasm. In terms of biological role, functions in complex with FlhC as a master transcriptional regulator that regulates transcription of several flagellar and non-flagellar operons by binding to their promoter region. Activates expression of class 2 flagellar genes, including fliA, which is a flagellum-specific sigma factor that turns on the class 3 genes. Also regulates genes whose products function in a variety of physiological pathways. The chain is Flagellar transcriptional regulator FlhD from Ralstonia pickettii (strain 12J).